Reading from the N-terminus, the 86-residue chain is Small ribosomal subunit protein uS17 (86 aa).

It belongs to the universal ribosomal protein uS17 family. Part of the 30S ribosomal subunit.

Functionally, one of the primary rRNA binding proteins, it binds specifically to the 5'-end of 16S ribosomal RNA. The chain is Small ribosomal subunit protein uS17 from Streptococcus mutans serotype c (strain ATCC 700610 / UA159).